Consider the following 384-residue polypeptide: L-aspartate decarboxylase (384 aa).

Residue Lys-231 is modified to N6-(pyridoxal phosphate)lysine.

The protein belongs to the group II decarboxylase family. MfnA subfamily. In terms of assembly, homodimer. Can also form homohexamers. It depends on pyridoxal 5'-phosphate as a cofactor.

It carries out the reaction L-aspartate + H(+) = beta-alanine + CO2. Its pathway is cofactor biosynthesis; coenzyme A biosynthesis. Inhibited by hydroxylamine. Functionally, catalyzes the decarboxylation of L-aspartate to produce beta-alanine. In vitro, can also catalyze the decarboxylation of L-glutamate to produce 4-aminobutanoate, but this activity does not seem necessary in vivo. Shows much higher activity with L-aspartate than with L-glutamate. Does not decarboxylate L-tyrosine. This is L-aspartate decarboxylase from Thermococcus kodakarensis (strain ATCC BAA-918 / JCM 12380 / KOD1) (Pyrococcus kodakaraensis (strain KOD1)).